The chain runs to 146 residues: Hemoglobin subunit beta-2 (146 aa).

In terms of domain architecture, Globin spans 2–146 (GLTAHEKQLI…IADALGKGYH (145 aa)). Heme b contacts are provided by H63 and H92.

It belongs to the globin family. In terms of assembly, heterotetramer of two alpha chains and two beta chains. Red blood cells.

Its function is as follows. Involved in oxygen transport from the lung to the various peripheral tissues. This chain is Hemoglobin subunit beta-2 (hbb2), found in Xenopus borealis (Kenyan clawed frog).